The sequence spans 90 residues: Secretoglobin family 1D member 2 (90 aa).

An N-terminal signal peptide occupies residues 1–21 (MKLSVCLLLVTLALCCYQANA).

This sequence belongs to the secretoglobin family. Lipophilin subfamily. Highest expression was found in skeletal muscle. Expressed as well in thymus, trachea, kidney, steroid responsive tissues (prostate, testis, uterus, breast and ovary) and salivary gland.

The protein localises to the secreted. Functionally, may bind androgens and other steroids, may also bind estramustine, a chemotherapeutic agent used for prostate cancer. May be under transcriptional regulation of steroid hormones. The chain is Secretoglobin family 1D member 2 (SCGB1D2) from Homo sapiens (Human).